A 258-amino-acid polypeptide reads, in one-letter code: UPF0246 protein YaaA (258 aa).

The protein belongs to the UPF0246 family.

The chain is UPF0246 protein YaaA from Shigella boydii serotype 18 (strain CDC 3083-94 / BS512).